The primary structure comprises 270 residues: Putative pyruvate, phosphate dikinase regulatory protein (270 aa).

148 to 155 contacts ADP; that stretch reads GVSRTSKT.

Belongs to the pyruvate, phosphate/water dikinase regulatory protein family. PDRP subfamily.

The catalysed reaction is N(tele)-phospho-L-histidyl/L-threonyl-[pyruvate, phosphate dikinase] + ADP = N(tele)-phospho-L-histidyl/O-phospho-L-threonyl-[pyruvate, phosphate dikinase] + AMP + H(+). It carries out the reaction N(tele)-phospho-L-histidyl/O-phospho-L-threonyl-[pyruvate, phosphate dikinase] + phosphate + H(+) = N(tele)-phospho-L-histidyl/L-threonyl-[pyruvate, phosphate dikinase] + diphosphate. Functionally, bifunctional serine/threonine kinase and phosphorylase involved in the regulation of the pyruvate, phosphate dikinase (PPDK) by catalyzing its phosphorylation/dephosphorylation. The polypeptide is Putative pyruvate, phosphate dikinase regulatory protein (Bacillus cereus (strain B4264)).